A 134-amino-acid chain; its full sequence is NADH-quinone oxidoreductase subunit A (134 aa).

The next 3 helical transmembrane spans lie at 12 to 32, 64 to 84, and 93 to 113; these read FAIY…LAAL, FYLV…LFAW, and WVGF…LLYL.

It belongs to the complex I subunit 3 family. NDH-1 is composed of 14 different subunits. Subunits NuoA, H, J, K, L, M, N constitute the membrane sector of the complex.

Its subcellular location is the cell inner membrane. The enzyme catalyses a quinone + NADH + 5 H(+)(in) = a quinol + NAD(+) + 4 H(+)(out). Its function is as follows. NDH-1 shuttles electrons from NADH, via FMN and iron-sulfur (Fe-S) centers, to quinones in the respiratory chain. The immediate electron acceptor for the enzyme in this species is believed to be ubiquinone. Couples the redox reaction to proton translocation (for every two electrons transferred, four hydrogen ions are translocated across the cytoplasmic membrane), and thus conserves the redox energy in a proton gradient. In Aeromonas salmonicida (strain A449), this protein is NADH-quinone oxidoreductase subunit A.